The sequence spans 163 residues: NADH-quinone oxidoreductase subunit I (163 aa).

2 consecutive 4Fe-4S ferredoxin-type domains span residues 53 to 83 and 94 to 123; these read LRRYPNGEERCIACKLCEAICPAQAITIEAG and VRYDIDMVKCIYCGFCQEACPVDAIVEGPN. [4Fe-4S] cluster is bound by residues cysteine 63, cysteine 66, cysteine 69, cysteine 73, cysteine 103, cysteine 106, cysteine 109, and cysteine 113.

Belongs to the complex I 23 kDa subunit family. In terms of assembly, NDH-1 is composed of 14 different subunits. Subunits NuoA, H, J, K, L, M, N constitute the membrane sector of the complex. It depends on [4Fe-4S] cluster as a cofactor.

It localises to the cell inner membrane. The enzyme catalyses a quinone + NADH + 5 H(+)(in) = a quinol + NAD(+) + 4 H(+)(out). NDH-1 shuttles electrons from NADH, via FMN and iron-sulfur (Fe-S) centers, to quinones in the respiratory chain. The immediate electron acceptor for the enzyme in this species is believed to be ubiquinone. Couples the redox reaction to proton translocation (for every two electrons transferred, four hydrogen ions are translocated across the cytoplasmic membrane), and thus conserves the redox energy in a proton gradient. In Agrobacterium fabrum (strain C58 / ATCC 33970) (Agrobacterium tumefaciens (strain C58)), this protein is NADH-quinone oxidoreductase subunit I.